The chain runs to 476 residues: Sedoheptulokinase (476 aa).

Belongs to the FGGY kinase family.

The protein localises to the cytoplasm. The catalysed reaction is sedoheptulose + ATP = D-sedoheptulose 7-phosphate + ADP + H(+). Functionally, acts as a modulator of macrophage activation through control of glucose metabolism. This chain is Sedoheptulokinase (Shpk), found in Mus musculus (Mouse).